The sequence spans 60 residues: MAEKIKVKLVKSTNGRLEKHRACVRGLGLRRIGHTVEVEDTPSVRGMINKVSYLVQVEGE.

The protein belongs to the universal ribosomal protein uL30 family. Part of the 50S ribosomal subunit.

This Alcanivorax borkumensis (strain ATCC 700651 / DSM 11573 / NCIMB 13689 / SK2) protein is Large ribosomal subunit protein uL30.